A 272-amino-acid polypeptide reads, in one-letter code: Ribosomal RNA large subunit methyltransferase E (272 aa).

S-adenosyl-L-methionine contacts are provided by Gly-50, Trp-52, Asp-68, Asp-84, and Asp-109. Lys-149 functions as the Proton acceptor in the catalytic mechanism. Residues 196 to 254 (PLRRGDKFVVDIEKLGSGGDGAVLIEGFVVFVKEVEVGEKVRIKIADVKPNFAFADVEE) form the TRAM domain.

This sequence belongs to the class I-like SAM-binding methyltransferase superfamily. RNA methyltransferase RlmE family.

It is found in the cytoplasm. It carries out the reaction uridine(2552) in 23S rRNA + S-adenosyl-L-methionine = 2'-O-methyluridine(2552) in 23S rRNA + S-adenosyl-L-homocysteine + H(+). Functionally, specifically methylates the uridine in position 2552 of 23S rRNA at the 2'-O position of the ribose in the fully assembled 50S ribosomal subunit. The sequence is that of Ribosomal RNA large subunit methyltransferase E from Methanosarcina acetivorans (strain ATCC 35395 / DSM 2834 / JCM 12185 / C2A).